The primary structure comprises 867 residues: 2-methylcitrate dehydratase (2-methyl-trans-aconitate forming) (867 aa).

Cys-410, Cys-476, and Cys-479 together coordinate [4Fe-4S] cluster.

The protein belongs to the aconitase/IPM isomerase family. [4Fe-4S] cluster serves as cofactor.

The enzyme catalyses (2S,3S)-2-methylcitrate = 2-methyl-trans-aconitate + H2O. The catalysed reaction is citrate = D-threo-isocitrate. The protein operates within organic acid metabolism; propanoate degradation. Its activity is regulated as follows. Inhibited by ferricyanide and EDTA. In terms of biological role, involved in the catabolism of short chain fatty acids (SCFA) via the 2-methylcitrate cycle II (propionate degradation route). In vivo under anaerobic conditions, AcnD catalyzes the stereospecific dehydration of (2S,3S)-methylcitrate (2-MC) to yield the trans isomer of 2-methyl-aconitate (2-MCA). AcnD can also accept citrate and cis-aconitate, but with a lower efficiency. 2-methylisocitrate and isocitrate are not substrates. This is 2-methylcitrate dehydratase (2-methyl-trans-aconitate forming) (acnD) from Shewanella oneidensis (strain ATCC 700550 / JCM 31522 / CIP 106686 / LMG 19005 / NCIMB 14063 / MR-1).